Consider the following 139-residue polypeptide: Large-conductance mechanosensitive channel (139 aa).

The next 3 helical transmembrane spans lie at 16-36 (VIDLAVGVIIGAAFNDIVKAL), 40-60 (IVMPPIGLVLSGIDFSDLAWV), and 79-99 (GAFINTCIRFLIVAWAVFMLV).

Belongs to the MscL family. Homopentamer.

It localises to the cell inner membrane. Its function is as follows. Channel that opens in response to stretch forces in the membrane lipid bilayer. May participate in the regulation of osmotic pressure changes within the cell. The chain is Large-conductance mechanosensitive channel from Phenylobacterium zucineum (strain HLK1).